We begin with the raw amino-acid sequence, 125 residues long: Succinate dehydrogenase assembly factor 3, mitochondrial (125 aa).

The N-terminal 30 residues, 1 to 30 (MPGRHVSRVRALYKRVLQLHRVLPPDLKSL), are a transit peptide targeting the mitochondrion.

It belongs to the complex I LYR family. SDHAF3 subfamily. As to quaternary structure, interacts with SDHB within an SDHA-SDHB subcomplex.

It localises to the mitochondrion matrix. Its function is as follows. Plays an essential role in the assembly of succinate dehydrogenase (SDH), an enzyme complex (also referred to as respiratory complex II) that is a component of both the tricarboxylic acid (TCA) cycle and the mitochondrial electron transport chain, and which couples the oxidation of succinate to fumarate with the reduction of ubiquinone (coenzyme Q) to ubiquinol. Promotes maturation of the iron-sulfur protein subunit SDHB of the SDH catalytic dimer, protecting it from the deleterious effects of oxidants. May act together with SDHAF1. This is Succinate dehydrogenase assembly factor 3, mitochondrial from Homo sapiens (Human).